The chain runs to 217 residues: Octanoyltransferase (217 aa).

A BPL/LPL catalytic domain is found at 32 to 207 (SDSPDELWIV…TLSQLLGYQQ (176 aa)). Residues 71–78 (RGGQVTYH), 138–140 (SLG), and 151–153 (GLA) contribute to the substrate site. Residue C169 is the Acyl-thioester intermediate of the active site.

This sequence belongs to the LipB family.

The protein localises to the cytoplasm. The catalysed reaction is octanoyl-[ACP] + L-lysyl-[protein] = N(6)-octanoyl-L-lysyl-[protein] + holo-[ACP] + H(+). Its pathway is protein modification; protein lipoylation via endogenous pathway; protein N(6)-(lipoyl)lysine from octanoyl-[acyl-carrier-protein]: step 1/2. Catalyzes the transfer of endogenously produced octanoic acid from octanoyl-acyl-carrier-protein onto the lipoyl domains of lipoate-dependent enzymes. Lipoyl-ACP can also act as a substrate although octanoyl-ACP is likely to be the physiological substrate. This Shewanella sp. (strain ANA-3) protein is Octanoyltransferase.